The following is a 660-amino-acid chain: Arginine--tRNA ligase, cytoplasmic (660 aa).

N-acetylmethionine is present on M1. The interval 1 to 72 (MDGLVAQCSA…QAERKRPTKN (72 aa)) is could be involved in the assembly of the multisynthetase complex. L-arginine-binding positions include 200–202 (SPN), H211, Y384, D388, and Q412. The 'HIGH' region signature appears at 201 to 212 (PNIAKEMHVGHL). The tract at residues 529–543 (NTAAYLLYAFTRIRS) is interaction with tRNA.

The protein belongs to the class-I aminoacyl-tRNA synthetase family. In terms of assembly, interacts (via N-terminus) with AIMP1 (via N-terminus); this stimulates its catalytic activity. Interacts (via N-terminus) with LARS2 (via C-terminus). Monomer. Part of a multisubunit complex that groups tRNA ligases for Arg (RARS1), Asp (DARS1), Gln (QARS1), Ile (IARS1), Leu (LARS1), Lys (KARS1), Met (MARS1) the bifunctional ligase for Glu and Pro (EPRS1) and the auxiliary subunits AIMP1/p43, AIMP2/p38 and EEF1E1/p18. Interacts with QARS1. Part of a complex composed of RARS1, QARS1 and AIMP1. In terms of tissue distribution, detected in dorsal root ganglion.

It localises to the cytoplasm. The protein resides in the cytosol. The enzyme catalyses tRNA(Arg) + L-arginine + ATP = L-arginyl-tRNA(Arg) + AMP + diphosphate. Functionally, forms part of a macromolecular complex that catalyzes the attachment of specific amino acids to cognate tRNAs during protein synthesis. Modulates the secretion of AIMP1 and may be involved in generation of the inflammatory cytokine EMAP2 from AIMP1. The chain is Arginine--tRNA ligase, cytoplasmic (Rars1) from Rattus norvegicus (Rat).